The primary structure comprises 252 residues: UPF0246 protein AM1_4276 (252 aa).

It belongs to the UPF0246 family.

This Acaryochloris marina (strain MBIC 11017) protein is UPF0246 protein AM1_4276.